Reading from the N-terminus, the 305-residue chain is UDP-3-O-acyl-N-acetylglucosamine deacetylase (305 aa).

Zn(2+) is bound by residues His79, His238, and Asp242. The Proton donor role is filled by His265.

Belongs to the LpxC family. Zn(2+) is required as a cofactor.

The catalysed reaction is a UDP-3-O-[(3R)-3-hydroxyacyl]-N-acetyl-alpha-D-glucosamine + H2O = a UDP-3-O-[(3R)-3-hydroxyacyl]-alpha-D-glucosamine + acetate. It functions in the pathway glycolipid biosynthesis; lipid IV(A) biosynthesis; lipid IV(A) from (3R)-3-hydroxytetradecanoyl-[acyl-carrier-protein] and UDP-N-acetyl-alpha-D-glucosamine: step 2/6. In terms of biological role, catalyzes the hydrolysis of UDP-3-O-myristoyl-N-acetylglucosamine to form UDP-3-O-myristoylglucosamine and acetate, the committed step in lipid A biosynthesis. The polypeptide is UDP-3-O-acyl-N-acetylglucosamine deacetylase (Enterobacter sp. (strain 638)).